The sequence spans 407 residues: MESAITLWQFLLQLLLDQKHEHLICWTSNDGEFKLLKAEEVAKLWGLRKNKTNMNYDKLSRALRYYYDKNIIKKVIGQKFVYKFVSFPEILKMDPHAVEISRESLLLQDSDCKASPEGREAHKHGLAALRSTSRNEYIHSGLYSSFTINSLQNPPDAFKAIKTEKLEEPPEDSPPVEEVRTVIRFVTNKTDKHVTRPVVSLPSTSEAAAASAFLASSVSAKISSLMLPNAASISSASPFSSRSPSLSPNSPLPSEHRSLFLEAACHDSDSLEPLNLSSGSKTKSPSLPPKAKKPKGLEISAPPLVLSGTDIGSIALNSPALPSGSLTPAFFTAQTPNGLLLTPSPLLSSIHFWSSLSPVAPLSPARLQGPSTLFQFPTLLNGHMPVPIPSLDRAASPVLLSSNSQKS.

Positions 5–85 (ITLWQFLLQL…IGQKFVYKFV (81 aa)) form a DNA-binding region, ETS. Residue Lys-92 forms a Glycyl lysine isopeptide (Lys-Gly) (interchain with G-Cter in SUMO2) linkage. Ser-115 is modified (phosphoserine). Lys-165 is covalently cross-linked (Glycyl lysine isopeptide (Lys-Gly) (interchain with G-Cter in SUMO2)). 2 disordered regions span residues 234 to 253 (SSAS…SPLP) and 271 to 298 (LEPL…KGLE). Residues 273–277 (PLNLS) carry the CTBP-binding motif motif. Ser-396 is subject to Phosphoserine.

This sequence belongs to the ETS family. Interacts with CTBP1.

The protein resides in the nucleus. May be a negative regulator of transcription, but can activate transcription when coexpressed with Ras, Src or Mos. Forms a ternary complex with the serum response factor and the ETS and SRF motifs of the Fos serum response element. This Homo sapiens (Human) protein is ETS domain-containing protein Elk-3 (ELK3).